The primary structure comprises 152 residues: Transcriptional regulator MraZ (152 aa).

SpoVT-AbrB domains lie at 5–52 (ASAV…PLNQ) and 81–124 (ATEC…SESE).

The protein belongs to the MraZ family. As to quaternary structure, forms oligomers.

It localises to the cytoplasm. It is found in the nucleoid. The chain is Transcriptional regulator MraZ from Histophilus somni (strain 129Pt) (Haemophilus somnus).